The following is a 1204-amino-acid chain: Erythroid differentiation-related factor 1 (1204 aa).

Disordered regions lie at residues 1–30, 220–264, 483–527, and 586–613; these read MGDA…QAES, QPVS…ASSQ, PKKE…SDDS, and KKES…RGGP. 3 stretches are compositionally biased toward low complexity: residues 9–30, 223–241, and 253–263; these read AEGP…QAES, SSTT…NDSE, and SSVSEDPSASS. The span at 496–513 shows a compositional bias: acidic residues; it reads NSDESYSEEEEEMPDSDE. 2 TPR repeats span residues 693–726 and 920–953; these read CCLC…QNAN and DIHP…LSRK.

The protein resides in the nucleus. Functionally, transcription factor involved in erythroid differentiation. Involved in transcriptional activation of the globin gene. The sequence is that of Erythroid differentiation-related factor 1 (EDRF1) from Pongo abelii (Sumatran orangutan).